The chain runs to 441 residues: 23S rRNA (uracil(1939)-C(5))-methyltransferase RlmD (441 aa).

The 59-residue stretch at 10–68 folds into the TRAM domain; sequence KPLKQQSLVLDITAMDHHGRGIAKHNNKVCFVSNALPNEQVKATIIADKARYSEAQTHK. Residues Cys81, Cys87, Cys90, and Cys169 each coordinate [4Fe-4S] cluster. S-adenosyl-L-methionine contacts are provided by Gln274, Phe303, Asn308, Glu324, Asp351, and Asp372. Cys398 functions as the Nucleophile in the catalytic mechanism.

It belongs to the class I-like SAM-binding methyltransferase superfamily. RNA M5U methyltransferase family. RlmD subfamily.

The catalysed reaction is uridine(1939) in 23S rRNA + S-adenosyl-L-methionine = 5-methyluridine(1939) in 23S rRNA + S-adenosyl-L-homocysteine + H(+). Functionally, catalyzes the formation of 5-methyl-uridine at position 1939 (m5U1939) in 23S rRNA. This chain is 23S rRNA (uracil(1939)-C(5))-methyltransferase RlmD, found in Pseudoalteromonas translucida (strain TAC 125).